Consider the following 159-residue polypeptide: Peptide methionine sulfoxide reductase MsrB (159 aa).

In terms of domain architecture, MsrB spans 14–137 (TEKLKENLTE…NSASLKFIAK (124 aa)). The active-site Nucleophile is cysteine 126.

The protein belongs to the MsrB Met sulfoxide reductase family.

The enzyme catalyses L-methionyl-[protein] + [thioredoxin]-disulfide + H2O = L-methionyl-(R)-S-oxide-[protein] + [thioredoxin]-dithiol. The protein is Peptide methionine sulfoxide reductase MsrB of Hathewaya histolytica (Clostridium histolyticum).